The following is a 289-amino-acid chain: RNA-binding protein CP29B, chloroplastic (289 aa).

A chloroplast-targeting transit peptide spans 1–62 (MAASASSLAL…NSPASRFARN (62 aa)). A phosphoserine mark is found at Ser-6 and Ser-12. Val-63 is subject to N-acetylvaline. The region spanning 91–169 (LKLFVGNLPF…RPLRVNAGPP (79 aa)) is the RRM 1 domain. The disordered stretch occupies residues 158–199 (DGRPLRVNAGPPPPKREDGFSRGPRSSFGSSGSGYGGGGGSG). Residues 170 to 203 (PPKREDGFSRGPRSSFGSSGSGYGGGGGSGAGSG) are linker (Gly-rich). Low complexity predominate over residues 178–187 (SRGPRSSFGS). Over residues 188–199 (SGSGYGGGGGSG) the composition is skewed to gly residues. An RRM 2 domain is found at 204–282 (NRVYVGNLSW…RQIRVSEAEA (79 aa)).

In terms of processing, ADP-ribosylated by the Pseudomonas syringae type III effector HopU1. ADP-ribosylation reduces the ability of the protein to bind RNA. Phosphorylated on tyrosine residues after treatment with abscisic acid (ABA). Phosphorylation may reduce the ability of the protein to bind RNA.

Its subcellular location is the plastid. It localises to the chloroplast. Functionally, could be involved in splicing and/or processing of chloroplast RNA's. This is RNA-binding protein CP29B, chloroplastic from Arabidopsis thaliana (Mouse-ear cress).